A 483-amino-acid polypeptide reads, in one-letter code: MKGLIARFIAGFALLLWAWDMVFPWQQLMQAEENRYNQIQQRKILRVGMVNHPLSYFIGAEGTAGIEYELAKSFANYLDVRLDIKTFDNSEQLFSALKDNKVDIAAAGLLYQPELSKQFQIGSAYYSASWQVVYKKGSNRPYKLSELEGDLIIPAGSAVLPILQRLKEDNPKLSWQTTNQFTQEELLLQVAEGKIPYTVGISVDISAAQHIRPNIAVGFDLTDEAPVLWYLPNSSYSELQAAVLDFMNHANETGLISRIEEKYFNHLAHFDYVDIQSYLKAIKLVLPKYQSLFEKYRGDLEWQMLAAIAYQESHWDPNATSPTGVRGMMMLTRDTAERMKITDRTSAEQSIRAGSEYLHMLMRQIPETVPKEDRIWYGLAAYNMGLGHLLDVRRLTRQLGGNPDNWLDVKKNLPLLAEKRHYSGLKYGYARGFEAFQYVENIRRYYSSIINHQRVEEQQIQNNEEQSSVPQEISKESDSTLKE.

The signal sequence occupies residues M1 to A18. Positions W19 to L267 are non-LT domain. The segment at H269–E483 is LT domain. E312 is an active-site residue. A disordered region spans residues Q459–E483. A compositionally biased stretch (basic and acidic residues) spans I473–E483.

In the N-terminal section; belongs to the bacterial solute-binding protein 3 family. The protein in the C-terminal section; belongs to the transglycosylase Slt family.

It is found in the cell outer membrane. It carries out the reaction Exolytic cleavage of the (1-&gt;4)-beta-glycosidic linkage between N-acetylmuramic acid (MurNAc) and N-acetylglucosamine (GlcNAc) residues in peptidoglycan, from either the reducing or the non-reducing ends of the peptidoglycan chains, with concomitant formation of a 1,6-anhydrobond in the MurNAc residue.. Murein-degrading enzyme that degrades murein glycan strands and insoluble, high-molecular weight murein sacculi, with the concomitant formation of a 1,6-anhydromuramoyl product. Lytic transglycosylases (LTs) play an integral role in the metabolism of the peptidoglycan (PG) sacculus. Their lytic action creates space within the PG sacculus to allow for its expansion as well as for the insertion of various structures such as secretion systems and flagella. The sequence is that of Membrane-bound lytic murein transglycosylase F from Actinobacillus pleuropneumoniae serotype 7 (strain AP76).